The sequence spans 64 residues: Probable spore germination protein GerPD (64 aa).

Required for the formation of functionally normal spores. Could be involved in the establishment of normal spore coat structure and/or permeability, which allows the access of germinants to their receptor. The chain is Probable spore germination protein GerPD (gerPD) from Bacillus cereus.